Reading from the N-terminus, the 352-residue chain is Probable dual-specificity RNA methyltransferase RlmN (352 aa).

Glu93 acts as the Proton acceptor in catalysis. Positions 99–332 (TAKRLTVCVS…ATVRQTRGLD (234 aa)) constitute a Radical SAM core domain. A disulfide bridge links Cys106 with Cys337. [4Fe-4S] cluster contacts are provided by Cys113, Cys117, and Cys120. Residues 160–161 (GE), Ser190, 213–215 (SLH), and Asn294 contribute to the S-adenosyl-L-methionine site. Cys337 serves as the catalytic S-methylcysteine intermediate.

Belongs to the radical SAM superfamily. RlmN family. It depends on [4Fe-4S] cluster as a cofactor.

It localises to the cytoplasm. It catalyses the reaction adenosine(2503) in 23S rRNA + 2 reduced [2Fe-2S]-[ferredoxin] + 2 S-adenosyl-L-methionine = 2-methyladenosine(2503) in 23S rRNA + 5'-deoxyadenosine + L-methionine + 2 oxidized [2Fe-2S]-[ferredoxin] + S-adenosyl-L-homocysteine. The enzyme catalyses adenosine(37) in tRNA + 2 reduced [2Fe-2S]-[ferredoxin] + 2 S-adenosyl-L-methionine = 2-methyladenosine(37) in tRNA + 5'-deoxyadenosine + L-methionine + 2 oxidized [2Fe-2S]-[ferredoxin] + S-adenosyl-L-homocysteine. Functionally, specifically methylates position 2 of adenine 2503 in 23S rRNA and position 2 of adenine 37 in tRNAs. The protein is Probable dual-specificity RNA methyltransferase RlmN of Synechococcus sp. (strain JA-2-3B'a(2-13)) (Cyanobacteria bacterium Yellowstone B-Prime).